The chain runs to 154 residues: Large ribosomal subunit protein uL15 (154 aa).

The disordered stretch occupies residues 1 to 44; sequence MKLNELGNCKGATRNRKRVGRGIGSGTGKTSGRGVKGQKSRSGV. Residues 21 to 35 show a composition bias toward gly residues; that stretch reads RGIGSGTGKTSGRGV.

This sequence belongs to the universal ribosomal protein uL15 family. As to quaternary structure, part of the 50S ribosomal subunit.

Binds to the 23S rRNA. This chain is Large ribosomal subunit protein uL15, found in Bartonella quintana (strain Toulouse) (Rochalimaea quintana).